The primary structure comprises 369 residues: Molybdenum import ATP-binding protein ModC (369 aa).

The 236-residue stretch at 4–239 (LQLRAVVADR…PRSRFGARIA (236 aa)) folds into the ABC transporter domain. An ATP-binding site is contributed by 31 to 38 (GPNGAGKS). A Mop domain is found at 293-361 (HGSPRNIVGL…VKAQEVALHP (69 aa)).

It belongs to the ABC transporter superfamily. Molybdate importer (TC 3.A.1.8) family. As to quaternary structure, the complex is composed of two ATP-binding proteins (ModC), two transmembrane proteins (ModB) and a solute-binding protein (ModA).

The protein resides in the cell membrane. The catalysed reaction is molybdate(out) + ATP + H2O = molybdate(in) + ADP + phosphate + H(+). In terms of biological role, part of the ABC transporter complex ModABC involved in molybdenum import. Responsible for energy coupling to the transport system. The chain is Molybdenum import ATP-binding protein ModC from Mycobacterium tuberculosis (strain CDC 1551 / Oshkosh).